The sequence spans 410 residues: 3-phosphoshikimate 1-carboxyvinyltransferase (410 aa).

3-phosphoshikimate-binding residues include lysine 20, serine 21, and arginine 25. Lysine 20 is a phosphoenolpyruvate binding site. Residues glycine 87 and arginine 115 each coordinate phosphoenolpyruvate. Serine 157, serine 158, glutamine 159, serine 183, aspartate 293, and lysine 320 together coordinate 3-phosphoshikimate. Glutamine 159 is a binding site for phosphoenolpyruvate. The Proton acceptor role is filled by aspartate 293. Phosphoenolpyruvate is bound by residues arginine 324, arginine 365, and lysine 391.

This sequence belongs to the EPSP synthase family. As to quaternary structure, monomer.

The protein localises to the cytoplasm. The enzyme catalyses 3-phosphoshikimate + phosphoenolpyruvate = 5-O-(1-carboxyvinyl)-3-phosphoshikimate + phosphate. Its pathway is metabolic intermediate biosynthesis; chorismate biosynthesis. Catalyzes the transfer of the enolpyruvyl moiety of phosphoenolpyruvate (PEP) to the 5-hydroxyl of shikimate-3-phosphate (S3P) to produce enolpyruvyl shikimate-3-phosphate and inorganic phosphate. The protein is 3-phosphoshikimate 1-carboxyvinyltransferase of Thermoplasma volcanium (strain ATCC 51530 / DSM 4299 / JCM 9571 / NBRC 15438 / GSS1).